The primary structure comprises 110 residues: MPNKVHVKKGDTVVVISGKYKGKQGKVLTVLPKDKKVVVEGVNIVKKHVRPNPKMPQGGIITQEAPIWACKVMLVCPKCNKPTRIGHRFIQEGEEEKKVRTCKKCGEIID.

It belongs to the universal ribosomal protein uL24 family. As to quaternary structure, part of the 50S ribosomal subunit.

Its function is as follows. One of two assembly initiator proteins, it binds directly to the 5'-end of the 23S rRNA, where it nucleates assembly of the 50S subunit. One of the proteins that surrounds the polypeptide exit tunnel on the outside of the subunit. This Caldicellulosiruptor saccharolyticus (strain ATCC 43494 / DSM 8903 / Tp8T 6331) protein is Large ribosomal subunit protein uL24.